A 393-amino-acid chain; its full sequence is Pyridoxamine--pyruvate transaminase (393 aa).

Residues glutamate 68, tyrosine 95, and threonine 146 each coordinate pyridoxal 5'-phosphate. The residue at position 197 (lysine 197) is an N6-(pyridoxal phosphate)lysine. Position 345 (arginine 345) interacts with pyridoxal 5'-phosphate.

This sequence belongs to the class-V pyridoxal-phosphate-dependent aminotransferase family. As to quaternary structure, homotetramer. Requires pyridoxal 5'-phosphate as cofactor.

The catalysed reaction is pyridoxamine + pyruvate = pyridoxal + L-alanine. Its function is as follows. Catalyzes a reversible transamination reaction between pyridoxamine and pyruvate to form pyridoxal and L-alanine. The polypeptide is Pyridoxamine--pyruvate transaminase (ppaT) (Mesorhizobium japonicum (strain LMG 29417 / CECT 9101 / MAFF 303099) (Mesorhizobium loti (strain MAFF 303099))).